The sequence spans 271 residues: Putative pyruvate, phosphate dikinase regulatory protein 2 (271 aa).

An ADP-binding site is contributed by 151–158 (GVSRTSKT).

Belongs to the pyruvate, phosphate/water dikinase regulatory protein family. PDRP subfamily.

It carries out the reaction N(tele)-phospho-L-histidyl/L-threonyl-[pyruvate, phosphate dikinase] + ADP = N(tele)-phospho-L-histidyl/O-phospho-L-threonyl-[pyruvate, phosphate dikinase] + AMP + H(+). It catalyses the reaction N(tele)-phospho-L-histidyl/O-phospho-L-threonyl-[pyruvate, phosphate dikinase] + phosphate + H(+) = N(tele)-phospho-L-histidyl/L-threonyl-[pyruvate, phosphate dikinase] + diphosphate. In terms of biological role, bifunctional serine/threonine kinase and phosphorylase involved in the regulation of the pyruvate, phosphate dikinase (PPDK) by catalyzing its phosphorylation/dephosphorylation. This is Putative pyruvate, phosphate dikinase regulatory protein 2 from Staphylococcus haemolyticus (strain JCSC1435).